The sequence spans 462 residues: tRNA modification GTPase MnmE (462 aa).

(6S)-5-formyl-5,6,7,8-tetrahydrofolate is bound by residues Arg-27, Glu-89, and Arg-128. A TrmE-type G domain is found at Gly-224–Phe-383. Asn-234 is a K(+) binding site. GTP-binding positions include Asn-234–Ser-239, Thr-253–Thr-259, and Asp-278–Gly-281. Ser-238 is a binding site for Mg(2+). Residues Thr-253, Val-255, and Thr-258 each contribute to the K(+) site. Position 259 (Thr-259) interacts with Mg(2+). Position 462 (Lys-462) interacts with (6S)-5-formyl-5,6,7,8-tetrahydrofolate.

The protein belongs to the TRAFAC class TrmE-Era-EngA-EngB-Septin-like GTPase superfamily. TrmE GTPase family. In terms of assembly, homodimer. Heterotetramer of two MnmE and two MnmG subunits. The cofactor is K(+).

It localises to the cytoplasm. In terms of biological role, exhibits a very high intrinsic GTPase hydrolysis rate. Involved in the addition of a carboxymethylaminomethyl (cmnm) group at the wobble position (U34) of certain tRNAs, forming tRNA-cmnm(5)s(2)U34. The sequence is that of tRNA modification GTPase MnmE from Latilactobacillus sakei subsp. sakei (strain 23K) (Lactobacillus sakei subsp. sakei).